The sequence spans 485 residues: Betaine aldehyde dehydrogenase (485 aa).

K(+) is bound by residues Thr-23, Ile-24, and Asp-90. NAD(+) is bound at residue 147-149 (GAW). Lys-159 (charge relay system) is an active-site residue. NAD(+) contacts are provided by residues 173–176 (KPSE) and 226–229 (EVGT). Position 241 (Leu-241) interacts with K(+). The active-site Proton acceptor is the Glu-247. NAD(+) is bound by residues Gly-249, Cys-281, and Glu-382. Catalysis depends on Cys-281, which acts as the Nucleophile. Cys-281 is modified (cysteine sulfenic acid (-SOH)). 2 residues coordinate K(+): Lys-452 and Gly-455. Glu-459 acts as the Charge relay system in catalysis.

It belongs to the aldehyde dehydrogenase family. In terms of assembly, dimer of dimers. The cofactor is K(+).

It catalyses the reaction betaine aldehyde + NAD(+) + H2O = glycine betaine + NADH + 2 H(+). The protein operates within amine and polyamine biosynthesis; betaine biosynthesis via choline pathway; betaine from betaine aldehyde: step 1/1. Involved in the biosynthesis of the osmoprotectant glycine betaine. Catalyzes the irreversible oxidation of betaine aldehyde to the corresponding acid. This is Betaine aldehyde dehydrogenase from Marinomonas sp. (strain MWYL1).